We begin with the raw amino-acid sequence, 208 residues long: Uracil phosphoribosyltransferase (208 aa).

5-phospho-alpha-D-ribose 1-diphosphate contacts are provided by residues Arg-78, Arg-103, and 130–138 (DPMLATGGS). Residues Ile-193 and 198-200 (GDA) contribute to the uracil site. Asp-199 provides a ligand contact to 5-phospho-alpha-D-ribose 1-diphosphate.

Belongs to the UPRTase family. Mg(2+) is required as a cofactor.

It carries out the reaction UMP + diphosphate = 5-phospho-alpha-D-ribose 1-diphosphate + uracil. It participates in pyrimidine metabolism; UMP biosynthesis via salvage pathway; UMP from uracil: step 1/1. With respect to regulation, allosterically activated by GTP. In terms of biological role, catalyzes the conversion of uracil and 5-phospho-alpha-D-ribose 1-diphosphate (PRPP) to UMP and diphosphate. The protein is Uracil phosphoribosyltransferase of Psychromonas ingrahamii (strain DSM 17664 / CCUG 51855 / 37).